A 242-amino-acid polypeptide reads, in one-letter code: MKLRRERFERRNGSGKNSQSSSSWMVTFTDLITLILVFFILLFSMSQIDLQKFKAAVDSIQKEGNGLQPDQTSIEKKNTSPSDTKKQEDQQDQLLKKVNTYIKDNHLKAQMTAKRDERGVVLVLQEAVLFDTGEAKVLKNAETLLHQIAVLLQTIPNDIQVEGHTDSRNISTYRYPSNWELSAARASGVIQYFTSKEKLPSKRFIAVGYADTKPVKDNKTNEHMKENRRVEIVIKKSKTTSS.

Basic and acidic residues predominate over residues 1-12; it reads MKLRRERFERRN. Residues 1-21 form a disordered region; the sequence is MKLRRERFERRNGSGKNSQSS. At 1 to 23 the chain is on the cytoplasmic side; that stretch reads MKLRRERFERRNGSGKNSQSSSS. Residues 24 to 44 form a helical membrane-spanning segment; that stretch reads WMVTFTDLITLILVFFILLFS. Over 45 to 242 the chain is Extracellular; it reads MSQIDLQKFK…VIKKSKTTSS (198 aa). The tract at residues 64 to 91 is disordered; that stretch reads GNGLQPDQTSIEKKNTSPSDTKKQEDQQ. Residues 73-89 show a composition bias toward basic and acidic residues; it reads SIEKKNTSPSDTKKQED. The OmpA-like domain maps to 117–238; that stretch reads ERGVVLVLQE…RVEIVIKKSK (122 aa).

The protein belongs to the MotB family.

It localises to the cell membrane. Its function is as follows. May be involved in some transport function. This is an uncharacterized protein from Bacillus subtilis (strain 168).